The primary structure comprises 561 residues: Oxygen-dependent choline dehydrogenase (561 aa).

Residue 6-35 (DYIIIGAGSAGNVLATRLTEDADVSVLLLE) coordinates FAD. Catalysis depends on histidine 475, which acts as the Proton acceptor.

The protein belongs to the GMC oxidoreductase family. It depends on FAD as a cofactor.

The catalysed reaction is choline + A = betaine aldehyde + AH2. It carries out the reaction betaine aldehyde + NAD(+) + H2O = glycine betaine + NADH + 2 H(+). The protein operates within amine and polyamine biosynthesis; betaine biosynthesis via choline pathway; betaine aldehyde from choline (cytochrome c reductase route): step 1/1. Involved in the biosynthesis of the osmoprotectant glycine betaine. Catalyzes the oxidation of choline to betaine aldehyde and betaine aldehyde to glycine betaine at the same rate. The protein is Oxygen-dependent choline dehydrogenase of Pseudomonas aeruginosa (strain UCBPP-PA14).